Here is a 353-residue protein sequence, read N- to C-terminus: Tsukushi (353 aa).

The signal sequence occupies residues 1-17 (MLCTLFLLLLALGIVQT). The LRRNT domain maps to 18–59 (TRPCFPGCQCEEETFGLFDSFSLIRVDCSSLGPHIVPVPIPL). LRR repeat units follow at residues 60–80 (DTAHLDLSSNRLETVNESVLG), 86–107 (TLAGLDLSHNLLTSITPTAFSR), 110–131 (YLESLDLSHNGLAALPAEVFTS), 133–154 (PLSDINLSHNRLREVSISAFTT), 160–180 (ALHVDLSHNLIHRLLPYPARA), 186–207 (TIQSLNLSWNRLRAVPDLRDLP), 208–228 (LRYLSLDGNPLATINPGAFMG), 231–253 (GLTHLSLASLQGILQLPPHGFRE), 256–277 (GLQVLDLSGNPKLKWAGAEVFS), and 281–302 (LLQELDLSGSSLVPLPETLLHH). Residue N75 is glycosylated (N-linked (GlcNAc...) asparagine). N138 carries N-linked (GlcNAc...) asparagine glycosylation. N-linked (GlcNAc...) asparagine glycosylation is present at N191.

As to quaternary structure, interacts with FZD4 (via FZ domain); competes with WNT2B for binding to FZD4, inhibiting Wnt signaling and repressing peripheral eye development. Interacts with TGFB1; the interaction contributes to regulation of the hair cycle. Interacts with netrin. Interacts with CCN2. Expressed at high levels in the liver, small intestine and placenta. Not or barely detectable in other tissues, including whole pancreas, adipose tissues, skeletal muscle, kidney, spleen, brain, lung and testis.

It is found in the secreted. Functionally, contributes to various developmental events and other processes such as wound healing and cholesterol homeostasis through its interactions with multiple signaling pathways. Wnt signaling inhibitor which competes with WNT2B for binding to Wnt receptor FZD4 and represses WNT2B-dependent development of the peripheral eye. Plays a role in regulating the hair cycle by controlling TGFB1 signaling. Required for the development of the anterior commissure in the brain by inhibiting neurite outgrowth. Essential for terminal differentiation of hippocampal neural stem cells. Plays a role in regulating bone elongation and bone mass by modulating growth plate chondrocyte function and overall body size. Required for development of the inner ear through its involvement in stereocilia formation in inner hair cells. Facilitates wound healing by inhibiting secretion of TGFB1 from macrophages which prevents myofibroblast differentiation, maintaining inflammatory cell quiescence. Plays a role in cholesterol homeostasis by reducing circulating high-density lipoprotein cholesterol, lowering cholesterol efflux capacity and decreasing cholesterol-to-bile acid conversion in the liver. In one study, shown to negatively regulate sympathetic innervation in brown fat, leading to reduced energy expenditure. In another study, shown not to affect brown fat thermogenic capacity, body weight gain or glucose homeostasis. The polypeptide is Tsukushi (Tsku) (Rattus norvegicus (Rat)).